The primary structure comprises 945 residues: Valine--tRNA ligase (945 aa).

Positions Pro42–His52 match the 'HIGH' region motif. Residues Lys552–Ser556 carry the 'KMSKS' region motif. Residue Lys555 coordinates ATP. A coiled-coil region spans residues Asp879–Asp945.

The protein belongs to the class-I aminoacyl-tRNA synthetase family. ValS type 1 subfamily. Monomer.

The protein localises to the cytoplasm. The enzyme catalyses tRNA(Val) + L-valine + ATP = L-valyl-tRNA(Val) + AMP + diphosphate. Its function is as follows. Catalyzes the attachment of valine to tRNA(Val). As ValRS can inadvertently accommodate and process structurally similar amino acids such as threonine, to avoid such errors, it has a 'posttransfer' editing activity that hydrolyzes mischarged Thr-tRNA(Val) in a tRNA-dependent manner. The chain is Valine--tRNA ligase from Neisseria meningitidis serogroup B (strain ATCC BAA-335 / MC58).